Consider the following 397-residue polypeptide: CCA-adding enzyme (397 aa).

Residues glycine 26 and arginine 29 each contribute to the ATP site. 2 residues coordinate CTP: glycine 26 and arginine 29. Aspartate 39 and aspartate 41 together coordinate Mg(2+). Positions 110, 153, 156, 159, and 162 each coordinate ATP. 5 residues coordinate CTP: arginine 110, aspartate 153, arginine 156, arginine 159, and arginine 162.

The protein belongs to the tRNA nucleotidyltransferase/poly(A) polymerase family. Bacterial CCA-adding enzyme type 3 subfamily. As to quaternary structure, homodimer. Mg(2+) is required as a cofactor.

The catalysed reaction is a tRNA precursor + 2 CTP + ATP = a tRNA with a 3' CCA end + 3 diphosphate. It catalyses the reaction a tRNA with a 3' CCA end + 2 CTP + ATP = a tRNA with a 3' CCACCA end + 3 diphosphate. Its function is as follows. Catalyzes the addition and repair of the essential 3'-terminal CCA sequence in tRNAs without using a nucleic acid template. Adds these three nucleotides in the order of C, C, and A to the tRNA nucleotide-73, using CTP and ATP as substrates and producing inorganic pyrophosphate. tRNA 3'-terminal CCA addition is required both for tRNA processing and repair. Also involved in tRNA surveillance by mediating tandem CCA addition to generate a CCACCA at the 3' terminus of unstable tRNAs. While stable tRNAs receive only 3'-terminal CCA, unstable tRNAs are marked with CCACCA and rapidly degraded. The polypeptide is CCA-adding enzyme (Bacillus cereus (strain ZK / E33L)).